The primary structure comprises 829 residues: Pre-mRNA-splicing factor syf1 (829 aa).

HAT repeat units follow at residues 15–47 (SLVS…YKLQ), 49–81 (GTVQ…FRTK), 93–125 (SEYQ…FLMQ), 127–161 (PLVT…FANS), 163–182 (EGET…PEDA), 277–312 (GSFE…FEES), 380–418 (DNKE…FYEA), 420–456 (GDLS…MELR), 473–505 (APKR…YVDL), 544–578 (KYFE…KAVD), 581–615 (ISIE…LEEE), and 689–723 (GEID…FEVQ). The interval 799-829 (AASEGPKGGSMPVQPVEVHNPDAIDLDEMDE) is disordered.

This sequence belongs to the crooked-neck family. In terms of assembly, associated with the spliceosome.

It is found in the nucleus. Involved in pre-mRNA splicing and cell cycle progression. The polypeptide is Pre-mRNA-splicing factor syf1 (msp-41) (Neurospora crassa (strain ATCC 24698 / 74-OR23-1A / CBS 708.71 / DSM 1257 / FGSC 987)).